We begin with the raw amino-acid sequence, 250 residues long: 2,3-bisphosphoglycerate-dependent phosphoglycerate mutase (250 aa).

Substrate contacts are provided by residues 8-15 (RHGESQWN), 21-22 (TG), R60, 87-90 (ERHY), K98, 114-115 (RR), and 183-184 (GN). H9 (tele-phosphohistidine intermediate) is an active-site residue. E87 functions as the Proton donor/acceptor in the catalytic mechanism.

The protein belongs to the phosphoglycerate mutase family. BPG-dependent PGAM subfamily. Homodimer.

The catalysed reaction is (2R)-2-phosphoglycerate = (2R)-3-phosphoglycerate. It participates in carbohydrate degradation; glycolysis; pyruvate from D-glyceraldehyde 3-phosphate: step 3/5. Catalyzes the interconversion of 2-phosphoglycerate and 3-phosphoglycerate. The sequence is that of 2,3-bisphosphoglycerate-dependent phosphoglycerate mutase from Bordetella parapertussis (strain 12822 / ATCC BAA-587 / NCTC 13253).